A 219-amino-acid chain; its full sequence is ATP-dependent Clp protease proteolytic subunit (219 aa).

Positions 1 to 22 (MPVGVPKVPFLNPNPDPEPDSV) are disordered. The Nucleophile role is filled by Ser116. Residue His141 is part of the active site.

The protein belongs to the peptidase S14 family. Component of the chloroplastic Clp protease core complex.

It is found in the plastid. The protein resides in the chloroplast stroma. The enzyme catalyses Hydrolysis of proteins to small peptides in the presence of ATP and magnesium. alpha-casein is the usual test substrate. In the absence of ATP, only oligopeptides shorter than five residues are hydrolyzed (such as succinyl-Leu-Tyr-|-NHMec, and Leu-Tyr-Leu-|-Tyr-Trp, in which cleavage of the -Tyr-|-Leu- and -Tyr-|-Trp bonds also occurs).. Cleaves peptides in various proteins in a process that requires ATP hydrolysis. Has a chymotrypsin-like activity. Plays a major role in the degradation of misfolded proteins. The sequence is that of ATP-dependent Clp protease proteolytic subunit from Pelargonium hortorum (Common geranium).